We begin with the raw amino-acid sequence, 296 residues long: Cytidine deaminase (296 aa).

CMP/dCMP-type deaminase domains follow at residues 47 to 167 (ELNE…FGPS) and 186 to 296 (DSND…VEPE). 88 to 90 (NIE) lines the substrate pocket. His-101 is a binding site for Zn(2+). Glu-103 (proton donor) is an active-site residue. Cys-128 and Cys-131 together coordinate Zn(2+).

It belongs to the cytidine and deoxycytidylate deaminase family. In terms of assembly, homodimer. It depends on Zn(2+) as a cofactor.

The catalysed reaction is cytidine + H2O + H(+) = uridine + NH4(+). It catalyses the reaction 2'-deoxycytidine + H2O + H(+) = 2'-deoxyuridine + NH4(+). Functionally, this enzyme scavenges exogenous and endogenous cytidine and 2'-deoxycytidine for UMP synthesis. In Shewanella pealeana (strain ATCC 700345 / ANG-SQ1), this protein is Cytidine deaminase.